The primary structure comprises 343 residues: Dual-specificity RNA methyltransferase RlmN (343 aa).

The active-site Proton acceptor is the glutamate 92. Positions 98 to 325 constitute a Radical SAM core domain; sequence DEDRTTLCIS…VITRSSRGSD (228 aa). A disulfide bond links cysteine 105 and cysteine 330. [4Fe-4S] cluster is bound by residues cysteine 112, cysteine 116, and cysteine 119. S-adenosyl-L-methionine is bound by residues 157–158, serine 189, 211–213, and asparagine 287; these read GE and SLN. Cysteine 330 functions as the S-methylcysteine intermediate in the catalytic mechanism.

This sequence belongs to the radical SAM superfamily. RlmN family. [4Fe-4S] cluster is required as a cofactor.

It localises to the cytoplasm. The catalysed reaction is adenosine(2503) in 23S rRNA + 2 reduced [2Fe-2S]-[ferredoxin] + 2 S-adenosyl-L-methionine = 2-methyladenosine(2503) in 23S rRNA + 5'-deoxyadenosine + L-methionine + 2 oxidized [2Fe-2S]-[ferredoxin] + S-adenosyl-L-homocysteine. The enzyme catalyses adenosine(37) in tRNA + 2 reduced [2Fe-2S]-[ferredoxin] + 2 S-adenosyl-L-methionine = 2-methyladenosine(37) in tRNA + 5'-deoxyadenosine + L-methionine + 2 oxidized [2Fe-2S]-[ferredoxin] + S-adenosyl-L-homocysteine. In terms of biological role, specifically methylates position 2 of adenine 2503 in 23S rRNA and position 2 of adenine 37 in tRNAs. m2A2503 modification seems to play a crucial role in the proofreading step occurring at the peptidyl transferase center and thus would serve to optimize ribosomal fidelity. In Geotalea uraniireducens (strain Rf4) (Geobacter uraniireducens), this protein is Dual-specificity RNA methyltransferase RlmN.